A 192-amino-acid polypeptide reads, in one-letter code: Ethylene-responsive transcription factor ERF027 (192 aa).

The segment at residues 18–74 (VYRGIRCRSGKWVSEIREPRKTTRIWLGTYPMAEMAAAAYDVAAMALKGREAVLNFP) is a DNA-binding region (AP2/ERF). Disordered regions lie at residues 104-132 (CEEG…HVDN) and 167-192 (APPS…LWGY). Acidic residues predominate over residues 179 to 192 (DSPENSNDEDLWGY).

Belongs to the AP2/ERF transcription factor family. ERF subfamily.

The protein localises to the nucleus. Functionally, probably acts as a transcriptional activator. Binds to the GCC-box pathogenesis-related promoter element. May be involved in the regulation of gene expression by stress factors and by components of stress signal transduction pathways. The polypeptide is Ethylene-responsive transcription factor ERF027 (ERF027) (Arabidopsis thaliana (Mouse-ear cress)).